The primary structure comprises 201 residues: Lymphotoxin-alpha (201 aa).

Residues 1 to 27 (MTSSGVLCLLGALSLQVLLLQPPGAQG) form the signal peptide. The tract at residues 23–52 (PGAQGAPNPDNSHSSSPAPPQTAQHLSQKS) is disordered. Residues 31-51 (PDNSHSSSPAPPQTAQHLSQK) are compositionally biased toward polar residues. Residues 60–201 (PAAHLVGDPS…SSVFFGAFAL (142 aa)) enclose the THD domain. Asn93 carries an N-linked (GlcNAc...) asparagine glycan. An intrachain disulfide couples Cys117 to Cys152.

The protein belongs to the tumor necrosis factor family. Homotrimer, and heterotrimer of either two LTB and one LTA subunits or (less prevalent) two LTA and one LTB subunits. Interacts with TNFRSF14.

It localises to the secreted. The protein resides in the membrane. In terms of biological role, cytokine that in its homotrimeric form binds to TNFRSF1A/TNFR1, TNFRSF1B/TNFBR and TNFRSF14/HVEM. In its heterotrimeric form with LTB binds to TNFRSF3/LTBR. Lymphotoxin is produced by lymphocytes and is cytotoxic for a wide range of tumor cells in vitro and in vivo. This chain is Lymphotoxin-alpha (LTA), found in Notamacropus eugenii (Tammar wallaby).